Consider the following 363-residue polypeptide: MNGTSFFGGDGTRLSHYDYDLPAAHIAQRPMEPRDHARLLVSRAQGVEDSRFDQLVEHLQAGDLLVLNDTKVIPARLLGHKPSGGRVEIFLLKPDPQHPPLWRAMTRSNKPLKVGQRVEFGEDFYAELVERQAEGHVLVALHAVGMGLDEAMQHYGQMPLPPYISGSDAQQDKSRYQTVFARRDGAVAAPTAGLHFTDALFERLAAKGVTWCHVTLHVGLGTFQPVRVEDLDAHPMHGEWRQLEADAVAKIQRTKAAGGRVVAVGTTAVRTLESSVDDQGVLQASCGETRLFIRPGYRFKVVDLMLTNFHLPKSTLLMLVAAFVGRSRLRRDYAHAMGKNYRFYSYGDTTLLYPQLEEERGLS.

The protein belongs to the QueA family. As to quaternary structure, monomer.

It is found in the cytoplasm. The catalysed reaction is 7-aminomethyl-7-carbaguanosine(34) in tRNA + S-adenosyl-L-methionine = epoxyqueuosine(34) in tRNA + adenine + L-methionine + 2 H(+). The protein operates within tRNA modification; tRNA-queuosine biosynthesis. Its function is as follows. Transfers and isomerizes the ribose moiety from AdoMet to the 7-aminomethyl group of 7-deazaguanine (preQ1-tRNA) to give epoxyqueuosine (oQ-tRNA). The chain is S-adenosylmethionine:tRNA ribosyltransferase-isomerase from Magnetococcus marinus (strain ATCC BAA-1437 / JCM 17883 / MC-1).